A 102-amino-acid polypeptide reads, in one-letter code: Carboxysome shell protein CcmK2 (102 aa).

Residues 4 to 90 (AVGMIETRGF…PHENLEYVLP (87 aa)) form the BMC domain.

It belongs to the bacterial microcompartments protein family. CcmK subfamily. In terms of assembly, homohexamer. Stacked hexamers, with the concave faces together, have also been crystallized. Interacts preferentially with itself, then with CcmK1 and CcmK4a in vitro. May interact with CcmL, this occurs at very high CcmK2 concentrations. Interacts with CcmN and CcmO in the carboxysome.

The protein resides in the carboxysome. In terms of biological role, probably the major shell protein of the carboxysome, a polyhedral inclusion where RuBisCO (ribulose bisphosphate carboxylase, rbcL-rbcS) is sequestered. Assembles into hexamers which make sheets that form the facets of the polyhedral carboxysome. The hexamer central pore probably regulates metabolite flux. This is Carboxysome shell protein CcmK2 from Thermosynechococcus vestitus (strain NIES-2133 / IAM M-273 / BP-1).